The primary structure comprises 358 residues: MSKGLPEARTDTAMSELVPEPRPKPAVPMKPVSINSNLLGCIGIDTIIEQMRKKTMKTGFDFNIMVVGQSGLGKSTLVNTLFKSQVSRKASSWNREEKIPKTVEIKAIGHVIEEGGVKMKLTVIDTPGFGDQINNENCWEPIEKYINEQYEKFLKEEVNIARKKRIPDTRVHCCLYFISPTGHSLRPLDLEFMKHLSKVVNVIPVIAKADTMTLEEKSEFKQRVRKELEVNGIEFYPQKEFDEDLEDKTENDKIRQESMPFAVVGSDKEYQVNGKRVLGRKTPWGIIEVENLNHCEFALLRDFVIRTHLQDLKEVTHNIHYETYRAKRLNDNGGLPPGEGLLGTVLPPVPATPCPTAE.

Over residues 1-10 (MSKGLPEART) the composition is skewed to basic and acidic residues. Positions 1 to 29 (MSKGLPEARTDTAMSELVPEPRPKPAVPM) are disordered. The Septin-type G domain occupies 58–331 (TGFDFNIMVV…ETYRAKRLND (274 aa)). Residues 68 to 75 (GQSGLGKS) form a G1 motif region. Residue 68 to 75 (GQSGLGKS) participates in GTP binding. At Ser-91 the chain carries Phosphoserine. Thr-102 contacts GTP. Residues 125–128 (DTPG) form a G3 motif region. A G4 motif region spans residues 207-210 (AKAD). GTP contacts are provided by residues 208–216 (KADTMTLEE), Gly-265, and Arg-280.

Belongs to the TRAFAC class TrmE-Era-EngA-EngB-Septin-like GTPase superfamily. Septin GTPase family. Septins polymerize into heterooligomeric protein complexes that form filaments, and can associate with cellular membranes, actin filaments and microtubules. GTPase activity is required for filament formation. Phosphorylated by PKG on serine residues. Phosphorylated by PKG on Ser-91. As to expression, brain-specific, with highest expression in the hippocampal CA3 region (at protein level).

The protein localises to the cytoplasm. It localises to the cytoskeleton. Its subcellular location is the synapse. Its function is as follows. Filament-forming cytoskeletal GTPase. May play a role in cytokinesis (Potential). The sequence is that of Neuronal-specific septin-3 from Rattus norvegicus (Rat).